A 109-amino-acid polypeptide reads, in one-letter code: T cell receptor alpha variable 26-1 (109 aa).

Residues 1-19 (MRLVARVTVFLTFGTIIDA) form the signal peptide. In terms of domain architecture, Ig-like spans 20–109 (KTTQPTSMDC…TAVYYCIVRV (90 aa)). The cysteines at positions 39 and 105 are disulfide-linked. Residues N40 and N71 are each glycosylated (N-linked (GlcNAc...) asparagine).

Alpha-beta TR is a heterodimer composed of an alpha and beta chain; disulfide-linked. The alpha-beta TR is associated with the transmembrane signaling CD3 coreceptor proteins to form the TR-CD3 (TcR or TCR). The assembly of alpha-beta TR heterodimers with CD3 occurs in the endoplasmic reticulum where a single alpha-beta TR heterodimer associates with one CD3D-CD3E heterodimer, one CD3G-CD3E heterodimer and one CD247 homodimer forming a stable octameric structure. CD3D-CD3E and CD3G-CD3E heterodimers preferentially associate with TR alpha and TR beta chains, respectively. The association of the CD247 homodimer is the last step of TcR assembly in the endoplasmic reticulum and is required for transport to the cell surface.

The protein resides in the cell membrane. In terms of biological role, v region of the variable domain of T cell receptor (TR) alpha chain that participates in the antigen recognition. Alpha-beta T cell receptors are antigen specific receptors which are essential to the immune response and are present on the cell surface of T lymphocytes. Recognize peptide-major histocompatibility (MH) (pMH) complexes that are displayed by antigen presenting cells (APC), a prerequisite for efficient T cell adaptive immunity against pathogens. Binding of alpha-beta TR to pMH complex initiates TR-CD3 clustering on the cell surface and intracellular activation of LCK that phosphorylates the ITAM motifs of CD3G, CD3D, CD3E and CD247 enabling the recruitment of ZAP70. In turn ZAP70 phosphorylates LAT, which recruits numerous signaling molecules to form the LAT signalosome. The LAT signalosome propagates signal branching to three major signaling pathways, the calcium, the mitogen-activated protein kinase (MAPK) kinase and the nuclear factor NF-kappa-B (NF-kB) pathways, leading to the mobilization of transcription factors that are critical for gene expression and essential for T cell growth and differentiation. The T cell repertoire is generated in the thymus, by V-(D)-J rearrangement. This repertoire is then shaped by intrathymic selection events to generate a peripheral T cell pool of self-MH restricted, non-autoaggressive T cells. Post-thymic interaction of alpha-beta TR with the pMH complexes shapes TR structural and functional avidity. This chain is T cell receptor alpha variable 26-1, found in Homo sapiens (Human).